The primary structure comprises 483 residues: AP-3 complex subunit mu (483 aa).

Positions 211 to 482 constitute an MHD domain; that stretch reads NNELYVDLLE…KTQTGNFQVR (272 aa).

Belongs to the adaptor complexes medium subunit family. As to quaternary structure, adaptor protein complex 3 (AP-3) is a heterotetramer composed of 2 large adaptins (APL5 and APL6), a medium adaptin (APM3) and a small adaptin (APS3).

It localises to the golgi apparatus. The protein localises to the cytoplasmic vesicle membrane. In terms of biological role, part of the AP-3 complex, an adaptor-related complex which is not clathrin-associated. The complex is associated with the Golgi region as well as more peripheral structures. It facilitates the budding of vesicles from the Golgi membrane and may be directly involved in trafficking to the vacuole. Required for the transport via the ALP pathway, which directs the transport of the cargo proteins PHO8 and VAM3 to the vacuole. This is AP-3 complex subunit mu (APM3) from Saccharomyces cerevisiae (strain ATCC 204508 / S288c) (Baker's yeast).